We begin with the raw amino-acid sequence, 192 residues long: MRIVLLGPPGAGKGTQAKMLCEEYHIPQLSTGDMLREVIRRETEIGKKAKAMINAGTLVSDSIVNQIVSDRIDESDCINGFVLDGYPRTVGQAEVLQQVLQSKNMQLDAVIELIVDEDALLERMKKRVQETIIAGGQVRSDDNPVAFAKRLVEYREKTAPLSEFYLQRRLLKLVDGMIGVTEVSRKIREVLK.

Glycine 10–threonine 15 is an ATP binding site. The segment at serine 30–valine 59 is NMP. AMP is bound by residues threonine 31, arginine 36, threonine 57 to valine 59, glycine 85 to arginine 88, and glutamine 92. The segment at lysine 126–aspartate 142 is LID. ATP is bound at residue arginine 127. Positions 139 and 150 each coordinate AMP. Residue isoleucine 178 participates in ATP binding.

The protein belongs to the adenylate kinase family. As to quaternary structure, monomer.

It is found in the cytoplasm. The catalysed reaction is AMP + ATP = 2 ADP. It participates in purine metabolism; AMP biosynthesis via salvage pathway; AMP from ADP: step 1/1. Catalyzes the reversible transfer of the terminal phosphate group between ATP and AMP. Plays an important role in cellular energy homeostasis and in adenine nucleotide metabolism. The sequence is that of Adenylate kinase from Bartonella henselae (strain ATCC 49882 / DSM 28221 / CCUG 30454 / Houston 1) (Rochalimaea henselae).